The chain runs to 521 residues: Vang-like protein 2 (521 aa).

Residues Met-1–His-81 are disordered. Over Met-1–Gly-108 the chain is Cytoplasmic. The span at Gly-15–Lys-33 shows a compositional bias: basic residues. The span at Glu-57–Asn-67 shows a compositional bias: basic and acidic residues. Residues Gly-69 to His-81 show a composition bias toward low complexity. A helical membrane pass occupies residues Val-109–Leu-129. The Extracellular portion of the chain corresponds to Pro-130–Gly-147. The helical transmembrane segment at Leu-148–Phe-168 threads the bilayer. Topologically, residues Arg-169–Val-178 are cytoplasmic. The chain crosses the membrane as a helical span at residues Phe-179–Phe-199. Residues Tyr-200–Gln-217 are Extracellular-facing. A helical transmembrane segment spans residues Phe-218 to Glu-238. The Cytoplasmic segment spans residues Leu-239–Val-521.

It belongs to the Vang family. As to quaternary structure, homodimer and heterodimer with Vangl1. Interacts through its C-terminal region with the N-terminal half of DVL1, DVL2 and DVL3. The PDZ domain of DVL1, DVL2 and DVL3 is required for the interaction. Variants Glu-255 and Asn-464 impair interaction with the DVL proteins. Also interacts with the PDZ domains of MAGI3, SCRIB/SCRB1 and FZD3. Interacts with PRICKLE3. In terms of tissue distribution, primarily expressed in the brain and epididymis. Not detected in the cochlea of Lp mice.

The protein resides in the cell membrane. In terms of biological role, involved in the control of early morphogenesis and patterning of both axial midline structures and the development of neural plate. Plays a role in the regulation of planar cell polarity, particularly in the orientation of stereociliary bundles in the cochlea. Required for polarization and movement of myocardializing cells in the outflow tract and seems to act via RHOA signaling to regulate this process. Required for cell surface localization of FZD3 and FZD6 in the inner ear. This is Vang-like protein 2 (Vangl2) from Mus musculus (Mouse).